Here is a 107-residue protein sequence, read N- to C-terminus: U1-lycotoxin-Ls1w (107 aa).

The N-terminal stretch at 1-20 (MLKVLVVVALLVTLISYSSS) is a signal peptide. The propeptide occupies 21–41 (EGIDDLEADELLSLMANEQTR). 4 disulfides stabilise this stretch: C44–C59, C51–C68, C58–C86, and C70–C84.

This sequence belongs to the neurotoxin 19 (CSTX) family. 04 (U1-Lctx) subfamily. In terms of tissue distribution, expressed by the venom gland.

It is found in the secreted. The sequence is that of U1-lycotoxin-Ls1w from Lycosa singoriensis (Wolf spider).